The sequence spans 403 residues: Phosphoglycerate kinase (403 aa).

Substrate is bound by residues 21–23, R36, 59–62, R119, and R159; these read DFN and HLGR. Residues K214, G301, E332, and 359 to 362 each bind ATP; that span reads GGDS.

It belongs to the phosphoglycerate kinase family. In terms of assembly, monomer.

Its subcellular location is the cytoplasm. The enzyme catalyses (2R)-3-phosphoglycerate + ATP = (2R)-3-phospho-glyceroyl phosphate + ADP. It functions in the pathway carbohydrate degradation; glycolysis; pyruvate from D-glyceraldehyde 3-phosphate: step 2/5. This is Phosphoglycerate kinase from Lactobacillus johnsonii (strain CNCM I-12250 / La1 / NCC 533).